Reading from the N-terminus, the 97-residue chain is Integration host factor subunit alpha (97 aa).

The interval 50–71 is disordered; sequence FGNFTLRDKPQRPGRNPKTGEE.

Belongs to the bacterial histone-like protein family. As to quaternary structure, heterodimer of an alpha and a beta chain.

This protein is one of the two subunits of integration host factor, a specific DNA-binding protein that functions in genetic recombination as well as in transcriptional and translational control. In Legionella pneumophila (strain Paris), this protein is Integration host factor subunit alpha.